A 222-amino-acid polypeptide reads, in one-letter code: UPF0758 protein Mpe_A2695 (222 aa).

The 123-residue stretch at 100–222 folds into the MPN domain; the sequence is VFDSPQAVKD…VVSFAERGLL (123 aa). Residues histidine 171, histidine 173, and aspartate 184 each coordinate Zn(2+). The short motif at 171–184 is the JAMM motif element; the sequence is HNHPSGVAEPSRAD.

This sequence belongs to the UPF0758 family.

In Methylibium petroleiphilum (strain ATCC BAA-1232 / LMG 22953 / PM1), this protein is UPF0758 protein Mpe_A2695.